We begin with the raw amino-acid sequence, 311 residues long: Putative F-box protein At1g31090 (311 aa).

Residues 4–53 enclose the F-box domain; the sequence is GANSDSIPTDLIYEILSRLSVKPITRFRCVSKLWESIICRQDFTELFHNR. The segment at 287 to 311 is disordered; sequence RPAEQNTSTSSREDHLVRTVKRKRA.

This is Putative F-box protein At1g31090 from Arabidopsis thaliana (Mouse-ear cress).